Consider the following 256-residue polypeptide: MGRGRIEIKKIENINSRQVTFSKRRNGLIKKAKELSILCDAEVALIIFSSTGKIYDFSSVCMEQILSRYGYTTASTEHKQQREHQLLICASHGNEAVLRNDDSMKGELERLQLAIERLKGKELEGMSFPDLISLENQLNESLHSVKDQKTQILLNQIERSRIQEKKALEENQILRKQVEMLGRGSGPKVLNERPQDSSPEADPESSSSEEDENDNEEHHSDTSLQLGLSSTGYCTKRKKPKIELVCDNSGSQVASD.

The region spanning 1–61 (MGRGRIEIKK…GKIYDFSSVC (61 aa)) is the MADS-box domain. Residues 94–184 (NEAVLRNDDS…RKQVEMLGRG (91 aa)) form the K-box domain. Positions 179-232 (EMLGRGSGPKVLNERPQDSSPEADPESSSSEEDENDNEEHHSDTSLQLGLSSTG) are disordered. Residues 199–215 (PEADPESSSSEEDENDN) show a composition bias toward acidic residues. The segment covering 222 to 232 (TSLQLGLSSTG) has biased composition (polar residues).

In terms of tissue distribution, mostly expressed in pollen, roots, flowers and siliques, and to a lower extent, in stems and leaves. Expressed in the endosperm and in developing male and female gametophytes. Also present in seedlings.

It is found in the nucleus. Its function is as follows. Probable transcription factor involved in the negative regulation of flowering, probably through the photoperiodic pathway. Prevents premature flowering. Downstream regulator of a subset of the MIKC* MADS-controlled genes required during pollen maturation. In Arabidopsis thaliana (Mouse-ear cress), this protein is Agamous-like MADS-box protein AGL18 (AGL18).